The primary structure comprises 477 residues: ETS translocation variant 1 (477 aa).

Ser-94 carries the post-translational modification Phosphoserine. Positions 128–178 (PQVGMRPSNPPTPSSTPVSPLHHASPNSAHTSKPDRAFPAHLPPSQPIQDS) are disordered. Phosphoserine; by RPS6KA1 and RPS6KA5 is present on residues Ser-191 and Ser-216. Lys-317 is covalently cross-linked (Glycyl lysine isopeptide (Lys-Gly) (interchain with G-Cter in SUMO2)). Positions 335–415 (LQLWQFLVAL…AGERYVYKFV (81 aa)) form a DNA-binding region, ETS.

Belongs to the ETS family. Post-translationally, sumoylated. Phosphorylated at Ser-191 and Ser-216 by RPS6KA1 and RPS6KA5; phosphorylation activates transcriptional activity.

Its subcellular location is the nucleus. Its function is as follows. Transcriptional activator that binds to DNA sequences containing the consensus pentanucleotide 5'-CGGA[AT]-3'. Required for olfactory dopaminergic neuron differentiation; may directly activate expression of tyrosine hydroxylase (TH). The chain is ETS translocation variant 1 (ETV1) from Bos taurus (Bovine).